Here is a 188-residue protein sequence, read N- to C-terminus: Inner membrane-spanning protein YciB (188 aa).

The next 5 helical transmembrane spans lie at I22 to M42, M50 to N70, L72 to S92, F121 to L141, and F149 to I169.

It belongs to the YciB family.

The protein resides in the cell inner membrane. In terms of biological role, plays a role in cell envelope biogenesis, maintenance of cell envelope integrity and membrane homeostasis. The sequence is that of Inner membrane-spanning protein YciB from Pectobacterium carotovorum subsp. carotovorum (strain PC1).